Consider the following 472-residue polypeptide: UDP-N-acetylmuramate--L-alanine ligase (472 aa).

Position 122–128 (122–128 (GTHGKTT)) interacts with ATP.

This sequence belongs to the MurCDEF family.

It localises to the cytoplasm. The enzyme catalyses UDP-N-acetyl-alpha-D-muramate + L-alanine + ATP = UDP-N-acetyl-alpha-D-muramoyl-L-alanine + ADP + phosphate + H(+). It participates in cell wall biogenesis; peptidoglycan biosynthesis. Its function is as follows. Cell wall formation. This is UDP-N-acetylmuramate--L-alanine ligase from Thermobifida fusca (strain YX).